Reading from the N-terminus, the 500-residue chain is L-2-amino-4-chloropent-4-enoate dechlorinase/desaturase (500 aa).

K311 carries the post-translational modification N6-(pyridoxal phosphate)lysine.

Belongs to the trans-sulfuration enzymes family. It depends on pyridoxal 5'-phosphate as a cofactor.

The enzyme catalyses L-2-amino-4-chloropent-4-enoate = L-propargylglycine + chloride + H(+). It participates in amino-acid metabolism. Its pathway is antibiotic biosynthesis. In terms of biological role, involved in the biosynthesis of terminal alkyne-containing amino acids such as L-propargylglycine (Pra) and L-beta-ethynylserine, that are produced as antibiotics by S.cattleya. Catalyzes gamma-elimination of chloride from 4-chloro-allyl-L-glycine (also named L-2-amino-4-chloropent-4-enoate), followed by an isomerization, to form the terminal-alkyne product L-propargylglycine. The sequence is that of L-2-amino-4-chloropent-4-enoate dechlorinase/desaturase from Streptantibioticus cattleyicolor (strain ATCC 35852 / DSM 46488 / JCM 4925 / NBRC 14057 / NRRL 8057) (Streptomyces cattleya).